The following is a 485-amino-acid chain: Glycogen synthase (485 aa).

Lys-20 provides a ligand contact to ADP-alpha-D-glucose.

The protein belongs to the glycosyltransferase 1 family. Bacterial/plant glycogen synthase subfamily.

It catalyses the reaction [(1-&gt;4)-alpha-D-glucosyl](n) + ADP-alpha-D-glucose = [(1-&gt;4)-alpha-D-glucosyl](n+1) + ADP + H(+). It participates in glycan biosynthesis; glycogen biosynthesis. In terms of biological role, synthesizes alpha-1,4-glucan chains using ADP-glucose. In Vibrio vulnificus (strain YJ016), this protein is Glycogen synthase.